An 88-amino-acid polypeptide reads, in one-letter code: Small ribosomal subunit protein uS15 (88 aa).

It belongs to the universal ribosomal protein uS15 family. As to quaternary structure, part of the 30S ribosomal subunit. Forms a bridge to the 50S subunit in the 70S ribosome, contacting the 23S rRNA.

Its function is as follows. One of the primary rRNA binding proteins, it binds directly to 16S rRNA where it helps nucleate assembly of the platform of the 30S subunit by binding and bridging several RNA helices of the 16S rRNA. Functionally, forms an intersubunit bridge (bridge B4) with the 23S rRNA of the 50S subunit in the ribosome. This is Small ribosomal subunit protein uS15 from Mycoplasma capricolum subsp. capricolum (strain California kid / ATCC 27343 / NCTC 10154).